The primary structure comprises 253 residues: Ubiquinone/menaquinone biosynthesis C-methyltransferase UbiE (253 aa).

S-adenosyl-L-methionine-binding positions include Thr76, Asp97, and 125-126; that span reads NA.

It belongs to the class I-like SAM-binding methyltransferase superfamily. MenG/UbiE family.

It carries out the reaction a 2-demethylmenaquinol + S-adenosyl-L-methionine = a menaquinol + S-adenosyl-L-homocysteine + H(+). The catalysed reaction is a 2-methoxy-6-(all-trans-polyprenyl)benzene-1,4-diol + S-adenosyl-L-methionine = a 5-methoxy-2-methyl-3-(all-trans-polyprenyl)benzene-1,4-diol + S-adenosyl-L-homocysteine + H(+). It functions in the pathway quinol/quinone metabolism; menaquinone biosynthesis; menaquinol from 1,4-dihydroxy-2-naphthoate: step 2/2. Its pathway is cofactor biosynthesis; ubiquinone biosynthesis. In terms of biological role, methyltransferase required for the conversion of demethylmenaquinol (DMKH2) to menaquinol (MKH2) and the conversion of 2-polyprenyl-6-methoxy-1,4-benzoquinol (DDMQH2) to 2-polyprenyl-3-methyl-6-methoxy-1,4-benzoquinol (DMQH2). This is Ubiquinone/menaquinone biosynthesis C-methyltransferase UbiE from Stenotrophomonas maltophilia (strain K279a).